We begin with the raw amino-acid sequence, 528 residues long: Glucose-6-phosphate isomerase (528 aa).

Glu-322 (proton donor) is an active-site residue. Active-site residues include His-351 and Lys-455.

Belongs to the GPI family.

The protein resides in the cytoplasm. The enzyme catalyses alpha-D-glucose 6-phosphate = beta-D-fructose 6-phosphate. The protein operates within carbohydrate biosynthesis; gluconeogenesis. Its pathway is carbohydrate degradation; glycolysis; D-glyceraldehyde 3-phosphate and glycerone phosphate from D-glucose: step 2/4. Its function is as follows. Catalyzes the reversible isomerization of glucose-6-phosphate to fructose-6-phosphate. In Trichormus variabilis (strain ATCC 29413 / PCC 7937) (Anabaena variabilis), this protein is Glucose-6-phosphate isomerase.